The sequence spans 373 residues: D-amino-acid oxidase 3 (373 aa).

The N-terminal stretch at 1–19 (MVKYDAVILGSGVLGLSIA) is a signal peptide. FAD-binding residues include S11, L14, D35, A46, S47, G51, and N53. F57 is an anthranilate binding site. A glycan (N-linked (GlcNAc...) asparagine) is linked at N180. An intrachain disulfide couples C214 to C271. Anthranilate-binding residues include Y229, Y246, and R296. (R)-lactate-binding residues include Y229, Y246, and R296. FAD is bound by residues R296, G342, G345, Y346, and Q347. The Microbody targeting signal signature appears at 371–373 (AKL).

Belongs to the DAMOX/DASOX family. The cofactor is FAD.

It is found in the peroxisome matrix. The catalysed reaction is a D-alpha-amino acid + O2 + H2O = a 2-oxocarboxylate + H2O2 + NH4(+). Functionally, catalyzes the oxidative deamination of D-amino acids with broad substrate specificity. Enables the organism to utilize D-amino acids as a source of nutrients. Enables the organism to utilize D-glutamate and D-methionine as a nitrogen source. Protects the organism from the toxicity of D-amino acids, including from D-glutamate. May play a role in its interaction with the host. The polypeptide is D-amino-acid oxidase 3 (Cryptococcus neoformans var. grubii serotype A (strain H99 / ATCC 208821 / CBS 10515 / FGSC 9487) (Filobasidiella neoformans var. grubii)).